Reading from the N-terminus, the 80-residue chain is Myocilin opposite strand protein (80 aa).

Positions 53–80 (EQAPPPHRTYLTVPPAPPPSPAEDPTVS) are disordered.

This Homo sapiens (Human) protein is Myocilin opposite strand protein.